The primary structure comprises 116 residues: Large ribosomal subunit protein bL19 (116 aa).

The protein belongs to the bacterial ribosomal protein bL19 family.

Functionally, this protein is located at the 30S-50S ribosomal subunit interface and may play a role in the structure and function of the aminoacyl-tRNA binding site. This chain is Large ribosomal subunit protein bL19, found in Clostridium novyi (strain NT).